The primary structure comprises 196 residues: Large ribosomal subunit protein bL25 (196 aa).

Belongs to the bacterial ribosomal protein bL25 family. CTC subfamily. As to quaternary structure, part of the 50S ribosomal subunit; part of the 5S rRNA/L5/L18/L25 subcomplex. Contacts the 5S rRNA. Binds to the 5S rRNA independently of L5 and L18.

In terms of biological role, this is one of the proteins that binds to the 5S RNA in the ribosome where it forms part of the central protuberance. The sequence is that of Large ribosomal subunit protein bL25 from Bacteroides thetaiotaomicron (strain ATCC 29148 / DSM 2079 / JCM 5827 / CCUG 10774 / NCTC 10582 / VPI-5482 / E50).